A 437-amino-acid chain; its full sequence is Putative galacturan 1,4-alpha-galacturonidase A (437 aa).

The first 20 residues, 1 to 20 (MKLSGSSALLLLGFGLLGHA), serve as a signal peptide directing secretion. Residues Asn-30, Asn-101, Asn-110, Asn-161, Asn-196, and Asn-203 are each glycosylated (N-linked (GlcNAc...) asparagine). The PbH1 1 repeat unit spans residues 222–243 (SDHVTITNWVYEGGDDAVAFKP). Asp-236 (proton donor) is an active-site residue. Residues Asn-244, Asn-252, Asn-278, Asn-324, Asn-352, Asn-371, Asn-382, and Asn-387 are each glycosylated (N-linked (GlcNAc...) asparagine). PbH1 repeat units follow at residues 245-265 (STNI…AFGS), 276-302 (VENI…YFKS), and 322-343 (VRNV…YIDT). Cysteines 396 and 402 form a disulfide.

This sequence belongs to the glycosyl hydrolase 28 family.

The protein resides in the secreted. It carries out the reaction [(1-&gt;4)-alpha-D-galacturonosyl](n) + H2O = alpha-D-galacturonate + [(1-&gt;4)-alpha-D-galacturonosyl](n-1). In terms of biological role, specific in hydrolyzing the terminal glycosidic bond of polygalacturonic acid and oligogalacturonates. The protein is Putative galacturan 1,4-alpha-galacturonidase A (rgxA) of Aspergillus flavus (strain ATCC 200026 / FGSC A1120 / IAM 13836 / NRRL 3357 / JCM 12722 / SRRC 167).